A 102-amino-acid chain; its full sequence is Small ribosomal subunit protein uS10 (102 aa).

It belongs to the universal ribosomal protein uS10 family. As to quaternary structure, part of the 30S ribosomal subunit.

Involved in the binding of tRNA to the ribosomes. The protein is Small ribosomal subunit protein uS10 of Caulobacter sp. (strain K31).